We begin with the raw amino-acid sequence, 274 residues long: Large ribosomal subunit protein uL2 (274 aa).

The interval 221 to 256 is disordered; sequence RGTAMNPVDHPHGGGEGRNFGKHPVTPWGVPTKGYK.

It belongs to the universal ribosomal protein uL2 family. Part of the 50S ribosomal subunit. Forms a bridge to the 30S subunit in the 70S ribosome.

One of the primary rRNA binding proteins. Required for association of the 30S and 50S subunits to form the 70S ribosome, for tRNA binding and peptide bond formation. It has been suggested to have peptidyltransferase activity; this is somewhat controversial. Makes several contacts with the 16S rRNA in the 70S ribosome. The chain is Large ribosomal subunit protein uL2 from Hahella chejuensis (strain KCTC 2396).